Consider the following 179-residue polypeptide: MSVAKIADAYAEALLELANSNKSLKETTNDMNIVSQFLANSSDLKKFLGNPLITRERKKNVLKDVLGEQISSVSLNFLMLLVNRGRVAFLDKIAQKFLELSYKQDAIEIAKVTSSVALSAQQQKELAGKLKLITGAKKIKLALRVEPKLIGGFTVEIGSKLIDTSIRGQLKKISNLLGA.

Belongs to the ATPase delta chain family. F-type ATPases have 2 components, F(1) - the catalytic core - and F(0) - the membrane proton channel. F(1) has five subunits: alpha(3), beta(3), gamma(1), delta(1), epsilon(1). CF(0) has four main subunits: a(1), b(1), b'(1) and c(10-14). The alpha and beta chains form an alternating ring which encloses part of the gamma chain. F(1) is attached to F(0) by a central stalk formed by the gamma and epsilon chains, while a peripheral stalk is formed by the delta, b and b' chains.

The protein resides in the plastid. The protein localises to the chloroplast thylakoid membrane. F(1)F(0) ATP synthase produces ATP from ADP in the presence of a proton or sodium gradient. F-type ATPases consist of two structural domains, F(1) containing the extramembraneous catalytic core and F(0) containing the membrane proton channel, linked together by a central stalk and a peripheral stalk. During catalysis, ATP synthesis in the catalytic domain of F(1) is coupled via a rotary mechanism of the central stalk subunits to proton translocation. In terms of biological role, this protein is part of the stalk that links CF(0) to CF(1). It either transmits conformational changes from CF(0) to CF(1) or is implicated in proton conduction. In Ochrosphaera neapolitana, this protein is ATP synthase subunit delta, chloroplastic.